We begin with the raw amino-acid sequence, 94 residues long: Cell division protein FtsB (94 aa).

The Cytoplasmic portion of the chain corresponds to 1-8; the sequence is MRLRSPYW. The helical transmembrane segment at 9 to 26 threads the bilayer; the sequence is LFVVLILALAGLQYRLWV. The Periplasmic portion of the chain corresponds to 27-94; the sequence is GDGSLAQVRD…DGETLYQLAK (68 aa). The stretch at 31-78 forms a coiled coil; sequence LAQVRDLQKQIADQHGENERLLERNRILEAEVAELKKGTETVEERARH.

Belongs to the FtsB family. Part of a complex composed of FtsB, FtsL and FtsQ.

It localises to the cell inner membrane. Essential cell division protein. May link together the upstream cell division proteins, which are predominantly cytoplasmic, with the downstream cell division proteins, which are predominantly periplasmic. This chain is Cell division protein FtsB, found in Pseudomonas aeruginosa (strain ATCC 15692 / DSM 22644 / CIP 104116 / JCM 14847 / LMG 12228 / 1C / PRS 101 / PAO1).